The chain runs to 896 residues: Protein translocase subunit SecA (896 aa).

Residues Gln-87, 105-109 (GEGKT), and Asp-512 each bind ATP. A disordered region spans residues 867–889 (QEPARSNRVAGRNDPCPCGSGKK). 4 residues coordinate Zn(2+): Cys-882, Cys-884, Cys-893, and Cys-894.

Belongs to the SecA family. In terms of assembly, monomer and homodimer. Part of the essential Sec protein translocation apparatus which comprises SecA, SecYEG and auxiliary proteins SecDF-YajC and YidC. Zn(2+) serves as cofactor.

The protein resides in the cell inner membrane. It is found in the cytoplasm. The enzyme catalyses ATP + H2O + cellular proteinSide 1 = ADP + phosphate + cellular proteinSide 2.. Functionally, part of the Sec protein translocase complex. Interacts with the SecYEG preprotein conducting channel. Has a central role in coupling the hydrolysis of ATP to the transfer of proteins into and across the cell membrane, serving as an ATP-driven molecular motor driving the stepwise translocation of polypeptide chains across the membrane. The polypeptide is Protein translocase subunit SecA (Pelobacter propionicus (strain DSM 2379 / NBRC 103807 / OttBd1)).